A 274-amino-acid chain; its full sequence is Diaminopimelate epimerase (274 aa).

Residues Asn13, Gln47, and Asn65 each contribute to the substrate site. Cys74 serves as the catalytic Proton donor. Substrate contacts are provided by residues 75–76 (GN), Asn149, Asn182, and 200–201 (ER). Cys209 functions as the Proton acceptor in the catalytic mechanism. Position 210-211 (210-211 (GT)) interacts with substrate.

Belongs to the diaminopimelate epimerase family. Homodimer.

The protein localises to the cytoplasm. The catalysed reaction is (2S,6S)-2,6-diaminopimelate = meso-2,6-diaminopimelate. Its pathway is amino-acid biosynthesis; L-lysine biosynthesis via DAP pathway; DL-2,6-diaminopimelate from LL-2,6-diaminopimelate: step 1/1. Catalyzes the stereoinversion of LL-2,6-diaminopimelate (L,L-DAP) to meso-diaminopimelate (meso-DAP), a precursor of L-lysine and an essential component of the bacterial peptidoglycan. This is Diaminopimelate epimerase from Rhizorhabdus wittichii (strain DSM 6014 / CCUG 31198 / JCM 15750 / NBRC 105917 / EY 4224 / RW1) (Sphingomonas wittichii).